A 290-amino-acid polypeptide reads, in one-letter code: DegV domain-containing protein MG450 (290 aa).

The 287-residue stretch at Ile3–Thr289 folds into the DegV domain. Positions 65 and 97 each coordinate hexadecanoate.

In terms of biological role, may bind long-chain fatty acids, such as palmitate, and may play a role in lipid transport or fatty acid metabolism. The chain is DegV domain-containing protein MG450 from Mycoplasma genitalium (strain ATCC 33530 / DSM 19775 / NCTC 10195 / G37) (Mycoplasmoides genitalium).